A 166-amino-acid chain; its full sequence is UPF0304 protein VP0990 (166 aa).

Belongs to the UPF0304 family.

This Vibrio parahaemolyticus serotype O3:K6 (strain RIMD 2210633) protein is UPF0304 protein VP0990.